Here is a 409-residue protein sequence, read N- to C-terminus: Elongation factor Tu, chloroplastic (409 aa).

The tr-type G domain maps to 10 to 214; that stretch reads KPHVNIGTIG…AVDAYIPTPE (205 aa). The G1 stretch occupies residues 19-26; it reads GHVDHGKT. 19-26 is a binding site for GTP; sequence GHVDHGKT. Position 26 (T26) interacts with Mg(2+). Residues 60 to 64 are G2; the sequence is GITIN. A G3 region spans residues 81 to 84; it reads DCPG. Residues 81-85 and 136-139 each bind GTP; these read DCPGH and NKQD. Positions 136-139 are G4; it reads NKQD. A G5 region spans residues 174-176; it reads SAL.

The protein belongs to the TRAFAC class translation factor GTPase superfamily. Classic translation factor GTPase family. EF-Tu/EF-1A subfamily.

The protein resides in the plastid. Its subcellular location is the chloroplast. It catalyses the reaction GTP + H2O = GDP + phosphate + H(+). In terms of biological role, GTP hydrolase that promotes the GTP-dependent binding of aminoacyl-tRNA to the A-site of ribosomes during protein biosynthesis. This is Elongation factor Tu, chloroplastic (tufA) from Thalassiosira pseudonana (Marine diatom).